The chain runs to 146 residues: MKKLLLVNGPNLNRLGVREVNVYGKGTLATLEADMKQEAETMGVELECFQSNHEGAIIDIIHEAEDIYEGIILNPGAFTHYSYAIRDAIASISIPVIEVHISNIHQRESFRHESVTAAVCAGQIVGFGFYGYKLALFALMEKLREA.

Tyr-23 serves as the catalytic Proton acceptor. Positions 74, 80, and 87 each coordinate substrate. His-100 acts as the Proton donor in catalysis. Residues 101-102 (IS) and Arg-111 contribute to the substrate site.

The protein belongs to the type-II 3-dehydroquinase family. In terms of assembly, homododecamer.

It carries out the reaction 3-dehydroquinate = 3-dehydroshikimate + H2O. Its pathway is metabolic intermediate biosynthesis; chorismate biosynthesis; chorismate from D-erythrose 4-phosphate and phosphoenolpyruvate: step 3/7. Catalyzes a trans-dehydration via an enolate intermediate. This Bacillus cereus (strain ATCC 14579 / DSM 31 / CCUG 7414 / JCM 2152 / NBRC 15305 / NCIMB 9373 / NCTC 2599 / NRRL B-3711) protein is 3-dehydroquinate dehydratase.